The chain runs to 648 residues: 1-deoxy-D-xylulose-5-phosphate synthase (648 aa).

Thiamine diphosphate contacts are provided by residues H73 and 114-116 (SHA). D145 provides a ligand contact to Mg(2+). Residues 146–147 (GA), N175, Y286, and E367 contribute to the thiamine diphosphate site. N175 provides a ligand contact to Mg(2+).

The protein belongs to the transketolase family. DXPS subfamily. Homodimer. It depends on Mg(2+) as a cofactor. The cofactor is thiamine diphosphate.

The catalysed reaction is D-glyceraldehyde 3-phosphate + pyruvate + H(+) = 1-deoxy-D-xylulose 5-phosphate + CO2. It participates in metabolic intermediate biosynthesis; 1-deoxy-D-xylulose 5-phosphate biosynthesis; 1-deoxy-D-xylulose 5-phosphate from D-glyceraldehyde 3-phosphate and pyruvate: step 1/1. In terms of biological role, catalyzes the acyloin condensation reaction between C atoms 2 and 3 of pyruvate and glyceraldehyde 3-phosphate to yield 1-deoxy-D-xylulose-5-phosphate (DXP). The sequence is that of 1-deoxy-D-xylulose-5-phosphate synthase from Rhodococcus erythropolis (strain PR4 / NBRC 100887).